A 548-amino-acid polypeptide reads, in one-letter code: MSGDTGPPKQGGTRYGSISSPPSPEPQQAPPGGTYLSEKIPIPDTESGTFSLRKLWAFTGPGFLMSIAFLDPGNIESDLQAGAVAGFKLLWVLLWATVLGLLCQRLAARLGVVTGKDLGEVCHLYYPKVPRILLWLTIELAIVGSDMQEVIGTAIAFSLLSAGRIPLWGGVLITIVDAFFFLFLDNYGLRKLEAFFGFLITIMALTFGYEYVVAQPAQGALLQGLFLPSCPGCGQPELLQAVGIIGAIIMPHNIYLHSSLVKSREVDRSRRADIREANMYFLIEATIALSVSFLINLFVMAVFGQAFYKQTNQAAFNICANSSLQDYAPIFPRNNLTVAVDIYQGGVILGCLFGPAALYIWAVGLLAAGQSSTMTGTYAGQFVMEGFLKLRWSRFARVLLTRSCAILPTVLLAVFRDLRDLSGLNDLLNVLQSLLLPFAVLPILTFTSMPALMREFANGLVSKVITSSIMVLVCAVNLYFVISYVPSLPHPAYFSLVALLAAAYLGLTTYLVWTCLITQGATLLAHSSHQRFLYGLPEEDQEKGRTSG.

A disordered region spans residues 1–38 (MSGDTGPPKQGGTRYGSISSPPSPEPQQAPPGGTYLSE). Residues 1-55 (MSGDTGPPKQGGTRYGSISSPPSPEPQQAPPGGTYLSEKIPIPDTESGTFSLRKL) lie on the Cytoplasmic side of the membrane. Residues 56 to 73 (WAFTGPGFLMSIAFLDPG) form a helical membrane-spanning segment. At 74–82 (NIESDLQAG) the chain is on the extracellular side. Residues 83-102 (AVAGFKLLWVLLWATVLGLL) form a helical membrane-spanning segment. Over 103–139 (CQRLAARLGVVTGKDLGEVCHLYYPKVPRILLWLTIE) the chain is Cytoplasmic. A helical membrane pass occupies residues 140–160 (LAIVGSDMQEVIGTAIAFSLL). Over 161–164 (SAGR) the chain is Extracellular. Residues 165–184 (IPLWGGVLITIVDAFFFLFL) traverse the membrane as a helical segment. The Cytoplasmic segment spans residues 185–193 (DNYGLRKLE). Residues 194 to 214 (AFFGFLITIMALTFGYEYVVA) traverse the membrane as a helical segment. Topologically, residues 215-237 (QPAQGALLQGLFLPSCPGCGQPE) are extracellular. The helical transmembrane segment at 238–256 (LLQAVGIIGAIIMPHNIYL) threads the bilayer. Over 257-284 (HSSLVKSREVDRSRRADIREANMYFLIE) the chain is Cytoplasmic. A helical membrane pass occupies residues 285–304 (ATIALSVSFLINLFVMAVFG). Residues 305–346 (QAFYKQTNQAAFNICANSSLQDYAPIFPRNNLTVAVDIYQGG) are Extracellular-facing. 2 N-linked (GlcNAc...) asparagine glycosylation sites follow: Asn-321 and Asn-335. A helical membrane pass occupies residues 347–366 (VILGCLFGPAALYIWAVGLL). Topologically, residues 367–397 (AAGQSSTMTGTYAGQFVMEGFLKLRWSRFAR) are cytoplasmic. Residues 398–415 (VLLTRSCAILPTVLLAVF) traverse the membrane as a helical segment. The Extracellular portion of the chain corresponds to 416 to 426 (RDLRDLSGLND). A helical membrane pass occupies residues 427–447 (LLNVLQSLLLPFAVLPILTFT). The Cytoplasmic segment spans residues 448–463 (SMPALMREFANGLVSK). The chain crosses the membrane as a helical span at residues 464 to 485 (VITSSIMVLVCAVNLYFVISYV). Residues 486–493 (PSLPHPAY) lie on the Extracellular side of the membrane. A helical membrane pass occupies residues 494 to 513 (FSLVALLAAAYLGLTTYLVW). Over 514–548 (TCLITQGATLLAHSSHQRFLYGLPEEDQEKGRTSG) the chain is Cytoplasmic.

It belongs to the NRAMP family.

It localises to the late endosome membrane. The protein localises to the lysosome membrane. It carries out the reaction Zn(2+)(in) + H(+)(out) = Zn(2+)(out) + H(+)(in). The catalysed reaction is Fe(2+)(in) + H(+)(out) = Fe(2+)(out) + H(+)(in). It catalyses the reaction Mn(2+)(in) + H(+)(out) = Mn(2+)(out) + H(+)(in). Its function is as follows. Macrophage-specific antiporter that fluxes metal ions in either direction against a proton gradient. Localized to late endosomal lysosomal membranes, delivers bivalent cations from the cytosol into these acidic compartments where they may directly affect antimicrobial activity. Involved in iron metabolism and host natural resistance to infection with intracellular parasites. Pathogen resistance involves sequestration of Fe(2+) and Mn(2+), cofactors of both prokaryotic and eukaryotic catalases and superoxide dismutases, not only to protect the macrophage against its own generation of reactive oxygen species, but to deny the cations to the pathogen for synthesis of its protective enzymes. The polypeptide is Natural resistance-associated macrophage protein 1 (SLC11A1) (Bison bison (American bison)).